The sequence spans 671 residues: Preterminal protein (671 aa).

Positions 380–389 match the Nuclear localization signal motif; it reads RLPVRRRRRR. Residues 386–409 form a disordered region; that stretch reads RRRRVPPPPPPPEEEEEGEALMEE. The span at 397-409 shows a compositional bias: acidic residues; sequence PEEEEEGEALMEE. An O-(5'-phospho-DNA)-serine modification is found at serine 580. The segment at 645 to 671 is disordered; the sequence is GADVPLPPLPAGPEPPLPPGARPRHRF. Over residues 649–665 the composition is skewed to pro residues; that stretch reads PLPPLPAGPEPPLPPGA.

The protein belongs to the adenoviridae terminal protein family. As to quaternary structure, heterodimer with the polymerase; this heterodimer binds to bp 9 to 18 of the genome. Interacts with host POU2F1; POU2F1 binds to the auxiliary sequences in the inverted terminal repeats and tethers the pTP-POL heterodimer to the origin DNA thereby participating in the assembly of the pre-initiation complex (POL-TP-DBP-NFIA-POU2F1). Preterminal protein is used to replicate viral genome, upon genomic encapsidation it is processed first into iTP and finally into TP by adenovirus protease.

The protein localises to the host nucleus matrix. In terms of biological role, protein covalently bound to the viral DNA that acts as a primer for viral genomic replication by DNA strand displacement. Assembles on the viral origin of replication in an initiation complex with viral polymerase, DBP, host NFIA and host POU2F1/OCT1. During initiation, the polymerase covalently couples the first dCTP with Ser-580 of pTP. The terminal protein stimulates the template activity over 20 fold compared to protein-free templates. Neo-synthesized viral genomes are linked to two preterminal proteins, one for each 5' end. These new genomes are encapsidated in the nucleus, and during capsid maturation by viral protease, preterminal protein is first cleaved into intermediary (iTP), then into mature TP. May play a role in host nuclear matrix localization of genomic DNA. The sequence is that of Preterminal protein from Homo sapiens (Human).